We begin with the raw amino-acid sequence, 429 residues long: Phosphomethylpyrimidine synthase (429 aa).

Residues N66, M95, Y124, H163, 185 to 187 (SRG), 226 to 229 (DGLR), and E265 each bind substrate. Residue H269 coordinates Zn(2+). Y292 contributes to the substrate binding site. H333 provides a ligand contact to Zn(2+). 3 residues coordinate [4Fe-4S] cluster: C407, C410, and C414.

Belongs to the ThiC family. [4Fe-4S] cluster is required as a cofactor.

It catalyses the reaction 5-amino-1-(5-phospho-beta-D-ribosyl)imidazole + S-adenosyl-L-methionine = 4-amino-2-methyl-5-(phosphooxymethyl)pyrimidine + CO + 5'-deoxyadenosine + formate + L-methionine + 3 H(+). It functions in the pathway cofactor biosynthesis; thiamine diphosphate biosynthesis. In terms of biological role, catalyzes the synthesis of the hydroxymethylpyrimidine phosphate (HMP-P) moiety of thiamine from aminoimidazole ribotide (AIR) in a radical S-adenosyl-L-methionine (SAM)-dependent reaction. In Pyrococcus abyssi (strain GE5 / Orsay), this protein is Phosphomethylpyrimidine synthase.